We begin with the raw amino-acid sequence, 253 residues long: Transposase for insertion sequence element IS904 (253 aa).

In terms of domain architecture, Integrase catalytic spans 90–253 (KATAPNKVWL…SPKDFEKYNS (164 aa)).

It belongs to the transposase IS3/IS150/IS904 family.

Involved in the transposition of the insertion sequence. The protein is Transposase for insertion sequence element IS904 (nisX1) of Lactococcus lactis subsp. lactis (strain IL1403) (Streptococcus lactis).